The chain runs to 120 residues: UPF0231 protein YacL (120 aa).

This sequence belongs to the UPF0231 family.

This Salmonella paratyphi A (strain ATCC 9150 / SARB42) protein is UPF0231 protein YacL.